The following is a 276-amino-acid chain: Small ribosomal subunit protein uS3 (276 aa).

Residues 17–86 (VDEYLAKELD…NPQIDVQDVG (70 aa)) enclose the KH type-2 domain. The interval 193–276 (FQINAPPKEP…AETHGDIQDR (84 aa)) is disordered. The span at 214 to 227 (EAEPSQAAETQEQQ) shows a compositional bias: low complexity. Composition is skewed to basic and acidic residues over residues 228-240 (AGEK…RLLD) and 258-276 (PESR…IQDR).

It belongs to the universal ribosomal protein uS3 family. Part of the 30S ribosomal subunit.

Its function is as follows. Binds the lower part of the 30S subunit head. This is Small ribosomal subunit protein uS3 from Methanothrix thermoacetophila (strain DSM 6194 / JCM 14653 / NBRC 101360 / PT) (Methanosaeta thermophila).